Consider the following 343-residue polypeptide: Fructose-bisphosphate aldolase (343 aa).

A D-glyceraldehyde 3-phosphate-binding site is contributed by S53. D95 (proton donor) is an active-site residue. The Zn(2+) site is built by H96, D131, E161, and H212. Dihydroxyacetone phosphate is bound at residue G213. H252 is a Zn(2+) binding site. Residues 253–255 and 274–277 contribute to the dihydroxyacetone phosphate site; these read GGS and NIDT.

It belongs to the class II fructose-bisphosphate aldolase family. The cofactor is Zn(2+).

It carries out the reaction beta-D-fructose 1,6-bisphosphate = D-glyceraldehyde 3-phosphate + dihydroxyacetone phosphate. The protein operates within carbohydrate degradation; glycolysis; D-glyceraldehyde 3-phosphate and glycerone phosphate from D-glucose: step 4/4. Its function is as follows. Catalyzes the aldol condensation of dihydroxyacetone phosphate (DHAP or glycerone-phosphate) with glyceraldehyde 3-phosphate (G3P) to form fructose 1,6-bisphosphate (FBP) in gluconeogenesis and the reverse reaction in glycolysis. The protein is Fructose-bisphosphate aldolase (fba) of Streptomyces coelicolor (strain ATCC BAA-471 / A3(2) / M145).